Here is a 364-residue protein sequence, read N- to C-terminus: Uroporphyrinogen decarboxylase (364 aa).

Substrate is bound by residues 28-32 (RQAGR), Asp-78, Tyr-160, Thr-215, and His-333.

Belongs to the uroporphyrinogen decarboxylase family. Homodimer.

It is found in the cytoplasm. It carries out the reaction uroporphyrinogen III + 4 H(+) = coproporphyrinogen III + 4 CO2. The protein operates within porphyrin-containing compound metabolism; protoporphyrin-IX biosynthesis; coproporphyrinogen-III from 5-aminolevulinate: step 4/4. Functionally, catalyzes the decarboxylation of four acetate groups of uroporphyrinogen-III to yield coproporphyrinogen-III. The chain is Uroporphyrinogen decarboxylase from Burkholderia pseudomallei (strain 668).